The following is a 514-amino-acid chain: ATP synthase subunit alpha (514 aa).

170–177 (GDRQIGKT) provides a ligand contact to ATP.

This sequence belongs to the ATPase alpha/beta chains family. As to quaternary structure, F-type ATPases have 2 components, CF(1) - the catalytic core - and CF(0) - the membrane proton channel. CF(1) has five subunits: alpha(3), beta(3), gamma(1), delta(1), epsilon(1). CF(0) has three main subunits: a(1), b(2) and c(9-12). The alpha and beta chains form an alternating ring which encloses part of the gamma chain. CF(1) is attached to CF(0) by a central stalk formed by the gamma and epsilon chains, while a peripheral stalk is formed by the delta and b chains.

The protein localises to the cell inner membrane. It catalyses the reaction ATP + H2O + 4 H(+)(in) = ADP + phosphate + 5 H(+)(out). Its function is as follows. Produces ATP from ADP in the presence of a proton gradient across the membrane. The alpha chain is a regulatory subunit. The chain is ATP synthase subunit alpha from Alcanivorax borkumensis (strain ATCC 700651 / DSM 11573 / NCIMB 13689 / SK2).